The chain runs to 81 residues: uncharacterized protein (81 aa).

A disordered region spans residues 1 to 58 (MPQSKQQFKRQGARQRDSKGKFVKARTGMATAPPAAVSTAAPTASTMTPTGSSTTATI). Residues 30–58 (ATAPPAAVSTAAPTASTMTPTGSSTTATI) show a composition bias toward low complexity.

This is an uncharacterized protein from Caenorhabditis elegans.